Here is a 304-residue protein sequence, read N- to C-terminus: bZIP transcription factor 50 (304 aa).

Over M1–T222 the chain is Cytoplasmic. 2 disordered regions span residues G26 to A60 and G94 to K163. Residues S45 to E59 show a composition bias toward low complexity. Residues E127 to D139 are compositionally biased toward acidic residues. The region spanning M141–K203 is the bZIP domain. Residues K143 to K167 are basic motif. Basic and acidic residues predominate over residues R150 to K163. The interval L169–L183 is leucine-zipper. A helical membrane pass occupies residues L223–L243. At P244–C304 the chain is on the lumenal side.

This sequence belongs to the bZIP family.

Its subcellular location is the endoplasmic reticulum membrane. It is found in the nucleus. With respect to regulation, transcriptionally activated by IRE1 in response to endoplasmic reticulum (ER) stress. IRE1 cleaves a 20-bp fragment causing a frameshift of the mRNA transcript, leading to a nuclear isoform of the BZIP50 activator. Its function is as follows. Transcription factor involved in endoplasmic reticulum (ER) stress response. Acts downstream of the ER stress sensors IRE1, BZIP39 and BZIP60 to activate BiP chaperone genes. The polypeptide is bZIP transcription factor 50 (Oryza sativa subsp. japonica (Rice)).